The sequence spans 278 residues: ATP synthase subunit a (278 aa).

A run of 6 helical transmembrane segments spans residues 43–63 (TWHI…LWIF), 104–124 (IAPL…MDMI), 148–168 (DVNI…FYSI), 191–211 (IPVN…SLAL), 222–242 (LIFI…TLGV), and 249–269 (LIFH…LTIV).

The protein belongs to the ATPase A chain family. F-type ATPases have 2 components, CF(1) - the catalytic core - and CF(0) - the membrane proton channel. CF(1) has five subunits: alpha(3), beta(3), gamma(1), delta(1), epsilon(1). CF(0) has three main subunits: a(1), b(2) and c(9-12). The alpha and beta chains form an alternating ring which encloses part of the gamma chain. CF(1) is attached to CF(0) by a central stalk formed by the gamma and epsilon chains, while a peripheral stalk is formed by the delta and b chains.

The protein localises to the cell inner membrane. Functionally, key component of the proton channel; it plays a direct role in the translocation of protons across the membrane. This chain is ATP synthase subunit a, found in Shewanella baltica (strain OS185).